Here is a 121-residue protein sequence, read N- to C-terminus: Large ribosomal subunit protein bL12 (121 aa).

This sequence belongs to the bacterial ribosomal protein bL12 family. Homodimer. Part of the ribosomal stalk of the 50S ribosomal subunit. Forms a multimeric L10(L12)X complex, where L10 forms an elongated spine to which 2 to 4 L12 dimers bind in a sequential fashion. Binds GTP-bound translation factors.

Its function is as follows. Forms part of the ribosomal stalk which helps the ribosome interact with GTP-bound translation factors. Is thus essential for accurate translation. The protein is Large ribosomal subunit protein bL12 of Pseudomonas fluorescens (strain Pf0-1).